A 1310-amino-acid polypeptide reads, in one-letter code: Major viral transcription factor ICP4 homolog (1310 aa).

Disordered regions lie at residues 117–271 (AGAR…GPVE), 285–454 (GAKA…TPII), and 636–697 (GSSP…LLDK). Residues 341 to 350 (PVEKKPKSRE) show a composition bias toward basic and acidic residues. 3 stretches are compositionally biased toward low complexity: residues 351–364 (FVSSSSSSSSWGSS), 392–407 (PSPSNSDDSDSNDGGS), and 648–666 (PSPTTPATQAPDPQPSAAA). Residues 677 to 685 (RLRTPRKRK) carry the Nuclear localization signal motif. Phosphoserine; by viral VZV ORF66 occurs at positions 686 and 722. Disordered stretches follow at residues 1193 to 1258 (GTRF…SFGV) and 1282 to 1310 (ELLSSSSSSEDEDDVWGGRGGRSPPQSRG). Over residues 1217–1227 (RTADDREHALE) the composition is skewed to basic and acidic residues. Residues 1228-1250 (LDDWEVGCEDAWDSEEGGGDDGD) are compositionally biased toward acidic residues.

It belongs to the herpesviridae ICP4 family. In terms of assembly, interacts with IE4 and IE63. Interacts with host USF1 and SP1. In terms of processing, phosphorylated by ORF66 protein kinase on Ser-686 and Ser-722. Also phosphorylated by ORF47 protein kinase and by human CSNK2A1/CKII.

It is found in the host nucleus. Its subcellular location is the host cytoplasm. It localises to the virion tegument. Functionally, transcriptional transactivator. May interact with and recruit specific components of the general transcription machinery to viral promoters and stabilize their formation for transcription initiation. Negatively regulates its own transcription. This immediate early (EI) protein may be necessary in virion for viral pathogenesis. This chain is Major viral transcription factor ICP4 homolog, found in Homo sapiens (Human).